A 109-amino-acid chain; its full sequence is Peptide chaperone MftB (109 aa).

Belongs to the peptide chaperone MftB family. As to quaternary structure, interacts with MftA and MftC.

Its function is as follows. Peptide chaperone involved in the biosynthesis of the enzyme cofactor mycofactocin (MFT). Binds MftA and MftC with high affinity, and is essential for MftC activity on MftA, likely via the formation of a ternary complex. This is Peptide chaperone MftB from Mycobacterium ulcerans (strain Agy99).